A 475-amino-acid polypeptide reads, in one-letter code: Ribulose bisphosphate carboxylase large chain (475 aa).

The propeptide occupies methionine 1–serine 2. Residue proline 3 is modified to N-acetylproline. N6,N6,N6-trimethyllysine is present on lysine 14. The substrate site is built by asparagine 123 and threonine 173. Catalysis depends on lysine 175, which acts as the Proton acceptor. Lysine 177 lines the substrate pocket. 3 residues coordinate Mg(2+): lysine 201, aspartate 203, and glutamate 204. Position 201 is an N6-carboxylysine (lysine 201). Histidine 294 (proton acceptor) is an active-site residue. The substrate site is built by arginine 295, histidine 327, and serine 379.

Belongs to the RuBisCO large chain family. Type I subfamily. As to quaternary structure, heterohexadecamer of 8 large chains and 8 small chains; disulfide-linked. The disulfide link is formed within the large subunit homodimers. The cofactor is Mg(2+). In terms of processing, the disulfide bond which can form in the large chain dimeric partners within the hexadecamer appears to be associated with oxidative stress and protein turnover.

Its subcellular location is the plastid. The protein resides in the chloroplast. It catalyses the reaction 2 (2R)-3-phosphoglycerate + 2 H(+) = D-ribulose 1,5-bisphosphate + CO2 + H2O. It carries out the reaction D-ribulose 1,5-bisphosphate + O2 = 2-phosphoglycolate + (2R)-3-phosphoglycerate + 2 H(+). In terms of biological role, ruBisCO catalyzes two reactions: the carboxylation of D-ribulose 1,5-bisphosphate, the primary event in carbon dioxide fixation, as well as the oxidative fragmentation of the pentose substrate in the photorespiration process. Both reactions occur simultaneously and in competition at the same active site. The chain is Ribulose bisphosphate carboxylase large chain from Fagopyrum esculentum subsp. ancestrale (Wild buckwheat).